The sequence spans 101 residues: Small ribosomal subunit protein uS14 (101 aa).

This sequence belongs to the universal ribosomal protein uS14 family. Part of the 30S ribosomal subunit. Contacts proteins S3 and S10.

In terms of biological role, binds 16S rRNA, required for the assembly of 30S particles and may also be responsible for determining the conformation of the 16S rRNA at the A site. This chain is Small ribosomal subunit protein uS14, found in Pseudomonas aeruginosa (strain LESB58).